A 499-amino-acid polypeptide reads, in one-letter code: Hexokinase-2, chloroplastic (499 aa).

Residues 1 to 30 (MSVTVSSPAGRSFHISRSPYKKISKPRVII) constitute a chloroplast transit peptide. The region spanning 39–490 (LAVAPILTKL…SGIGAALLAA (452 aa)) is the Hexokinase domain. The hexokinase small subdomain stretch occupies residues 94 to 232 (TGNEKGLFYA…GLGMQVSALV (139 aa)). The ADP site is built by Gly-108, Thr-109, and Asn-110. D-glucose-binding residues include Thr-198, Lys-199, Asn-233, and Asp-234. The segment at 233 to 479 (NDTVATLAGA…KNVVIEHSKD (247 aa)) is hexokinase large subdomain. An ADP-binding site is contributed by Thr-257. D-glucose-binding residues include Asn-260, Glu-288, and Glu-318. Position 444 (Gly-444) interacts with ADP.

This sequence belongs to the hexokinase family. As to expression, expressed in vascular starch sheath, xylem parenchyma, guard cells and root tips.

It is found in the plastid. The protein resides in the chloroplast stroma. It carries out the reaction a D-hexose + ATP = a D-hexose 6-phosphate + ADP + H(+). The enzyme catalyses D-fructose + ATP = D-fructose 6-phosphate + ADP + H(+). The catalysed reaction is D-glucose + ATP = D-glucose 6-phosphate + ADP + H(+). It functions in the pathway carbohydrate metabolism; hexose metabolism. The protein operates within carbohydrate degradation; glycolysis; D-glyceraldehyde 3-phosphate and glycerone phosphate from D-glucose: step 1/4. In terms of biological role, fructose and glucose phosphorylating enzyme. This Nicotiana tabacum (Common tobacco) protein is Hexokinase-2, chloroplastic (HXK2).